We begin with the raw amino-acid sequence, 440 residues long: Streptokinase C (440 aa).

Residues 1–26 (MKNYLSFGMFALLFALTFGTVNSVQA) form the signal peptide.

This protein is not a protease, but it activates plasminogen by complexing with it. As a potential virulence factor, it is thought to prevent the formation of effective fibrin barriers around the site of infection, thereby contributing to the invasiveness of the cells. The polypeptide is Streptokinase C (skc) (Streptococcus dysgalactiae subsp. equisimilis (Streptococcus equisimilis)).